We begin with the raw amino-acid sequence, 115 residues long: UPF0738 protein SACOL1009 (115 aa).

This sequence belongs to the UPF0738 family.

The protein is UPF0738 protein SACOL1009 of Staphylococcus aureus (strain COL).